Consider the following 648-residue polypeptide: Mitochondrial Rho GTPase 1 (648 aa).

The Cytoplasmic portion of the chain corresponds to 1–619; the sequence is MARYAAGAVD…KHYNRLINRS (619 aa). A Phosphoserine modification is found at S14. A Miro 1 domain is found at 15–182; sequence PKSVRIVVVG…FYYAQKTVLH (168 aa). EF-hand domains follow at residues 198 to 233 and 319 to 354; these read RCVR…CFHA and AAID…APES. 9 residues coordinate Ca(2+): D211, D213, D215, E222, D332, D334, D336, N338, and E343. The 169-residue stretch at 427 to 595 folds into the Miro 2 domain; the sequence is RKVFQCFVFG…FRKILTAAQH (169 aa). A helical transmembrane segment spans residues 620 to 640; sequence LMAVSIGAAAVVVGLAAYRVY. Residues 641–648 lie on the Mitochondrial intermembrane side of the membrane; that stretch reads ATRKSSSA.

The protein belongs to the mitochondrial Rho GTPase family. As to expression, expressed in roots, leaves, stems, flowers and siliques.

The protein resides in the mitochondrion outer membrane. Mitochondrial GTPase required to maintain proper development, morphology and intracellular distribution of mitochondria, which in turn are essential for the progress of embryonic cell division, development of haploid male and female gametes, and pollen tube growth. This is Mitochondrial Rho GTPase 1 from Arabidopsis thaliana (Mouse-ear cress).